We begin with the raw amino-acid sequence, 75 residues long: Mu-conotoxin GIIIA (75 aa).

The first 20 residues, 1-20 (MMSKLGVLLTICLLLFPLTA), serve as a signal peptide directing secretion. A propeptide spanning residues 21–51 (LPMDGDEPANRPVERMQDNISSEQYPLFEKR) is cleaved from the precursor. Cystine bridges form between Cys54/Cys66, Cys55/Cys71, and Cys61/Cys72. Pro57 and Pro58 each carry 4-hydroxyproline; partial. Pro68 is subject to 4-hydroxyproline. Ala73 bears the Alanine amide mark.

It belongs to the conotoxin M superfamily. Hydroxylated; hydroxylations improve the ability to block Nav1.4/SCN4A sodium channels but does not affect folding. As to expression, expressed by the venom duct.

The protein localises to the secreted. In terms of biological role, mu-conotoxins block voltage-gated sodium channels (Nav). This toxin potently blocks rat Nav1.4/SCN4A (IC(50)= 19-110 nM). It also moderately blocks rNav1.1/SCN1A (Kd=260 nM), rNav1.2/SCN2A (IC(50)=2.7-17.8 uM), and mNav1.6/SCN8A (IC(50)=680 nM). The inhibition is reversible. In vivo, induces paralysis to an isolated skeletal muscle preparation from frog (cutaneous pectoralis) within a few minutes. This Conus geographus (Geography cone) protein is Mu-conotoxin GIIIA.